A 571-amino-acid chain; its full sequence is Glutamate--tRNA ligase (571 aa).

The short motif at 38 to 48 (PSPTGFMHIGG) is the 'HIGH' region element. The 'KMSKS' region signature appears at 316–320 (KLSKR). Lys-319 contacts ATP.

It belongs to the class-I aminoacyl-tRNA synthetase family. Glutamate--tRNA ligase type 1 subfamily. As to quaternary structure, monomer.

The protein resides in the cytoplasm. It catalyses the reaction tRNA(Glu) + L-glutamate + ATP = L-glutamyl-tRNA(Glu) + AMP + diphosphate. In terms of biological role, catalyzes the attachment of glutamate to tRNA(Glu) in a two-step reaction: glutamate is first activated by ATP to form Glu-AMP and then transferred to the acceptor end of tRNA(Glu). This Sorangium cellulosum (strain So ce56) (Polyangium cellulosum (strain So ce56)) protein is Glutamate--tRNA ligase.